The following is a 567-amino-acid chain: Periplasmic [NiFe] hydrogenase large subunit (567 aa).

Glu62 lines the Mg(2+) pocket. The Ni(2+) site is built by Cys81 and Cys84. Cys84 contacts Fe cation. Leu498 is a binding site for Mg(2+). Ni(2+)-binding residues include Cys546 and Cys549. Cys549 is a binding site for Fe cation. His552 serves as a coordination point for Mg(2+). Positions 553 to 567 (VIDGHTNEVHKFRIL) are excised as a propeptide.

This sequence belongs to the [NiFe]/[NiFeSe] hydrogenase large subunit family. In terms of assembly, heterodimer of a large and a small subunit. Ni(2+) is required as a cofactor. Requires Fe cation as cofactor.

The protein resides in the periplasm. It catalyses the reaction 2 Fe(III)-[cytochrome c3] + H2 = 2 Fe(II)-[cytochrome c3] + 2 H(+). Catalyzes the reversible oxidoreduction of molecular hydrogen, in conjunction with a specific electron acceptor, cytochrome c3. In Nitratidesulfovibrio vulgaris (strain DSM 19637 / Miyazaki F) (Desulfovibrio vulgaris), this protein is Periplasmic [NiFe] hydrogenase large subunit (hydB).